The following is a 447-amino-acid chain: Phosphoglucosamine mutase (447 aa).

The active-site Phosphoserine intermediate is the serine 88. Residues serine 88, aspartate 231, aspartate 233, and aspartate 235 each coordinate Mg(2+). Serine 88 carries the post-translational modification Phosphoserine.

The protein belongs to the phosphohexose mutase family. Mg(2+) is required as a cofactor. In terms of processing, activated by phosphorylation.

The enzyme catalyses alpha-D-glucosamine 1-phosphate = D-glucosamine 6-phosphate. Functionally, catalyzes the conversion of glucosamine-6-phosphate to glucosamine-1-phosphate. The chain is Phosphoglucosamine mutase from Methanococcus maripaludis (strain C5 / ATCC BAA-1333).